A 366-amino-acid chain; its full sequence is Glutathione S-transferase omega-like 3 (366 aa).

Residue Cys46 is part of the active site. Positions Pro197–Val349 constitute a GST C-terminal domain.

This sequence belongs to the GST superfamily. Omega family.

It localises to the cytoplasm. The enzyme catalyses RX + glutathione = an S-substituted glutathione + a halide anion + H(+). Its function is as follows. Active as '1-Cys' thiol transferase against beta-hydroxyethyl disulfide (HED), as dehydroascorbate reductase and as dimethylarsinic acid reductase, while not active against the standard GST substrate 1-chloro-2,4-dinitrobenzene (CDNB). The chain is Glutathione S-transferase omega-like 3 (GTO3) from Saccharomyces cerevisiae (strain ATCC 204508 / S288c) (Baker's yeast).